The primary structure comprises 152 residues: MSTVPVVQGAGSSNSAQDISTSSAPLTLKERISNLLSSTAFKVGLVVIGLLLVIATLIFLVSAASFVNAIYLVAIPAILGCVNICVGILSMEGHCSPERWILCKKVLKTSEDIIDDGQINNSNKVFTDERLNAIDGVVESLSRRNSLVDQTQ.

The interval 1 to 20 (MSTVPVVQGAGSSNSAQDIS) is disordered. The next 2 membrane-spanning stretches (helical) occupy residues 43 to 63 (VGLV…LVSA) and 69 to 89 (AIYL…VGIL).

The protein localises to the membrane. The chain is Sulfur-rich protein (srp) from Chlamydia trachomatis serovar A (strain ATCC VR-571B / DSM 19440 / HAR-13).